The chain runs to 441 residues: Glutamyl-tRNA reductase (441 aa).

Substrate is bound by residues 49–52, S109, 114–116, and Q120; these read TCNR and EGQ. C50 acts as the Nucleophile in catalysis. 198-203 is an NADP(+) binding site; it reads GAGRMS.

This sequence belongs to the glutamyl-tRNA reductase family. As to quaternary structure, homodimer.

The catalysed reaction is (S)-4-amino-5-oxopentanoate + tRNA(Glu) + NADP(+) = L-glutamyl-tRNA(Glu) + NADPH + H(+). Its pathway is porphyrin-containing compound metabolism; protoporphyrin-IX biosynthesis; 5-aminolevulinate from L-glutamyl-tRNA(Glu): step 1/2. The protein operates within porphyrin-containing compound metabolism; chlorophyll biosynthesis. Its function is as follows. Catalyzes the NADPH-dependent reduction of glutamyl-tRNA(Glu) to glutamate 1-semialdehyde (GSA). In Prochlorococcus marinus (strain NATL2A), this protein is Glutamyl-tRNA reductase.